Consider the following 322-residue polypeptide: Probable arabinan endo-1,5-alpha-L-arabinosidase A (322 aa).

A signal peptide spans 1–19; that stretch reads MYLPTLAASASLLVGVAHG. Catalysis depends on Asp-34, which acts as the Proton acceptor. The Proton donor role is filled by Glu-201.

It belongs to the glycosyl hydrolase 43 family.

It is found in the secreted. It carries out the reaction Endohydrolysis of (1-&gt;5)-alpha-arabinofuranosidic linkages in (1-&gt;5)-arabinans.. It functions in the pathway glycan metabolism; L-arabinan degradation. In terms of biological role, endo-1,5-alpha-L-arabinanase involved in degradation of pectin. Its preferred substrate is linear 1,5-alpha-L-arabinan. This chain is Probable arabinan endo-1,5-alpha-L-arabinosidase A (abnA), found in Emericella nidulans (strain FGSC A4 / ATCC 38163 / CBS 112.46 / NRRL 194 / M139) (Aspergillus nidulans).